Consider the following 275-residue polypeptide: Fructose-2,6-bisphosphatase TIGAR (275 aa).

The Tele-phosphohistidine intermediate role is filled by His11. The active-site Proton donor/acceptor is Glu89.

Belongs to the phosphoglycerate mutase family.

The protein localises to the cytoplasm. It is found in the nucleus. Its subcellular location is the mitochondrion. The catalysed reaction is beta-D-fructose 2,6-bisphosphate + H2O = beta-D-fructose 6-phosphate + phosphate. Functionally, fructose-bisphosphatase hydrolyzing fructose-2,6-bisphosphate as well as fructose-1,6-bisphosphate. Acts as a negative regulator of glycolysis by lowering intracellular levels of fructose-2,6-bisphosphate in a p53/TP53-dependent manner, resulting in the pentose phosphate pathway (PPP) activation and NADPH production. Contributes to the generation of reduced glutathione to cause a decrease in intracellular reactive oxygen species (ROS) content, correlating with its ability to protect cells from oxidative or metabolic stress-induced cell death. May play a role in mitophagy inhibition. This chain is Fructose-2,6-bisphosphatase TIGAR, found in Xenopus tropicalis (Western clawed frog).